The primary structure comprises 341 residues: MLVLGLETSCDETGVALYDSERGLLADALFSQIDLHRVYGGVVPELASRDHVKRMLPLIRQVLAEADCVPTEIDAIAYTAGPGLVGALLVGASCAQALAFAWGIPALGVHHMEGHLLAPMLEPKPPEFPFVALLVSGGHTQLVQVDGIGQYSLLGETLDDAAGEAFDKTAKMMGLNYPGGPEIAKLAEKGVAGRFTFPRPMCDRPGLDFSFSGLKTFALNTWQQCVSAGDDSEQARCDIALAFQQAVVETLTIKCKRALKQAGMKRLVIAGGVSANRALRVSLEKMLGDMKGDVFYARPEFCTDNGAMIAFAGCQRLQAGQQESLAISVQARWPMEQLSAL.

2 residues coordinate Fe cation: histidine 111 and histidine 115. Substrate is bound by residues 134–138, aspartate 167, glycine 180, and asparagine 276; that span reads LVSGG. Aspartate 304 contacts Fe cation.

It belongs to the KAE1 / TsaD family. It depends on Fe(2+) as a cofactor.

The protein resides in the cytoplasm. It catalyses the reaction L-threonylcarbamoyladenylate + adenosine(37) in tRNA = N(6)-L-threonylcarbamoyladenosine(37) in tRNA + AMP + H(+). In terms of biological role, required for the formation of a threonylcarbamoyl group on adenosine at position 37 (t(6)A37) in tRNAs that read codons beginning with adenine. Is involved in the transfer of the threonylcarbamoyl moiety of threonylcarbamoyl-AMP (TC-AMP) to the N6 group of A37, together with TsaE and TsaB. TsaD likely plays a direct catalytic role in this reaction. The sequence is that of tRNA N6-adenosine threonylcarbamoyltransferase from Pseudomonas fluorescens (strain Pf0-1).